We begin with the raw amino-acid sequence, 164 residues long: S-ribosylhomocysteine lyase (164 aa).

The Fe cation site is built by His61, His65, and Cys131.

This sequence belongs to the LuxS family. As to quaternary structure, homodimer. Fe cation serves as cofactor.

It carries out the reaction S-(5-deoxy-D-ribos-5-yl)-L-homocysteine = (S)-4,5-dihydroxypentane-2,3-dione + L-homocysteine. In terms of biological role, involved in the synthesis of autoinducer 2 (AI-2) which is secreted by bacteria and is used to communicate both the cell density and the metabolic potential of the environment. The regulation of gene expression in response to changes in cell density is called quorum sensing. Catalyzes the transformation of S-ribosylhomocysteine (RHC) to homocysteine (HC) and 4,5-dihydroxy-2,3-pentadione (DPD). The polypeptide is S-ribosylhomocysteine lyase (Bifidobacterium longum (strain NCC 2705)).